Reading from the N-terminus, the 294-residue chain is MARGREAVTLLLVGWGYAPGMQTLEALDAVRRADVVYVESYTMPGSSWLYKSVVEAAGEARVVEASRRDLEERSREIVSRALDAVVAVVTAGDPMVATTHSSLAAEALEAGVAVRYIPGVSGVQAARGATMLSFYRFGGTVTLPGPWRGVTPISVARRIYLNLCAGLHTTALLDVDERGVQLSPGQGVSLLLEADREYAREAGAPALLARLPSVLVEAGAGGGHRVLYWSSLERLSTADVEGGVYSIVIPARLSGVEEWLLAAASGQRRPLEYDRSVYETVEENCKKGVYMEPV.

S-adenosyl-L-methionine-binding positions include Asp93, Val96, 121 to 122 (SG), Leu173, and Ala220.

Belongs to the diphthine synthase family. As to quaternary structure, homodimer.

It catalyses the reaction 2-[(3S)-amino-3-carboxypropyl]-L-histidyl-[translation elongation factor 2] + 3 S-adenosyl-L-methionine = diphthine-[translation elongation factor 2] + 3 S-adenosyl-L-homocysteine + 3 H(+). The protein operates within protein modification; peptidyl-diphthamide biosynthesis. S-adenosyl-L-methionine-dependent methyltransferase that catalyzes the trimethylation of the amino group of the modified target histidine residue in translation elongation factor 2 (EF-2), to form an intermediate called diphthine. The three successive methylation reactions represent the second step of diphthamide biosynthesis. The protein is Diphthine synthase (dphB) of Aeropyrum pernix (strain ATCC 700893 / DSM 11879 / JCM 9820 / NBRC 100138 / K1).